The following is a 601-amino-acid chain: 3-hydroxy-3-methylglutaryl-coenzyme A reductase (601 aa).

The disordered stretch occupies residues 1–34 (MDSRRRSPTVTAKAAAGELPLAPHEGQNQQPSIP). Transmembrane regions (helical) follow at residues 36–58 (SSDVLPLPLYLANGVFFTLFFSV) and 86–106 (ALASLIASVIYLVSFFGLDFV). The tract at residues 107-179 (QSLIYKPNNE…PLITPQNSEE (73 aa)) is linker. The catalytic stretch occupies residues 180–601 (DEDIIKAVVA…IASSQLESDS (422 aa)). Glu-273 serves as the catalytic Charge relay system. Residue Asn-337 is glycosylated (N-linked (GlcNAc...) asparagine). Residues Lys-405 and Asp-481 each act as charge relay system in the active site. The Proton donor role is filled by His-579. Asn-583 is a glycosylation site (N-linked (GlcNAc...) asparagine).

Belongs to the HMG-CoA reductase family.

Its subcellular location is the endoplasmic reticulum membrane. The catalysed reaction is (R)-mevalonate + 2 NADP(+) + CoA = (3S)-3-hydroxy-3-methylglutaryl-CoA + 2 NADPH + 2 H(+). It participates in metabolic intermediate biosynthesis; (R)-mevalonate biosynthesis; (R)-mevalonate from acetyl-CoA: step 3/3. Its function is as follows. Catalyzes the synthesis of mevalonate. The specific precursor of all isoprenoid compounds present in plants. This chain is 3-hydroxy-3-methylglutaryl-coenzyme A reductase (HMGR), found in Catharanthus roseus (Madagascar periwinkle).